The chain runs to 201 residues: Aminoglycoside N(6')-acetyltransferase type 1 (201 aa).

Residues 25–192 (VTLRLMTEHD…PAVYMVQTRQ (168 aa)) form the N-acetyltransferase domain. Tryptophan 51 and aspartate 154 together coordinate substrate. Acetyl-CoA is bound at residue asparagine 159.

Homodimer.

It catalyses the reaction kanamycin B + acetyl-CoA = N(6')-acetylkanamycin B + CoA + H(+). Its function is as follows. Catalyzes the transfer of an acetyl group from acetyl-CoA to the 6'-amino group of aminoglycoside molecules conferring resistance to antibiotics containing the purpurosamine ring including amikacin and kanamycin. The chain is Aminoglycoside N(6')-acetyltransferase type 1 (aacA4) from Serratia marcescens.